Here is a 91-residue protein sequence, read N- to C-terminus: DNA-directed RNA polymerase subunit omega (91 aa).

This sequence belongs to the RNA polymerase subunit omega family. In terms of assembly, the RNAP catalytic core consists of 2 alpha, 1 beta, 1 beta' and 1 omega subunit. When a sigma factor is associated with the core the holoenzyme is formed, which can initiate transcription.

It catalyses the reaction RNA(n) + a ribonucleoside 5'-triphosphate = RNA(n+1) + diphosphate. In terms of biological role, promotes RNA polymerase assembly. Latches the N- and C-terminal regions of the beta' subunit thereby facilitating its interaction with the beta and alpha subunits. The polypeptide is DNA-directed RNA polymerase subunit omega (Yersinia enterocolitica serotype O:8 / biotype 1B (strain NCTC 13174 / 8081)).